The following is a 211-amino-acid chain: LexA repressor (211 aa).

The segment at residues 27–47 (QTEIARAFGFKGVRAAQYHLE) is a DNA-binding region (H-T-H motif). Residues serine 131 and lysine 168 each act as for autocatalytic cleavage activity in the active site.

Belongs to the peptidase S24 family. In terms of assembly, homodimer.

It catalyses the reaction Hydrolysis of Ala-|-Gly bond in repressor LexA.. Represses a number of genes involved in the response to DNA damage (SOS response), including recA and lexA. In the presence of single-stranded DNA, RecA interacts with LexA causing an autocatalytic cleavage which disrupts the DNA-binding part of LexA, leading to derepression of the SOS regulon and eventually DNA repair. The protein is LexA repressor of Stenotrophomonas maltophilia (strain R551-3).